Consider the following 613-residue polypeptide: Dihydroxy-acid dehydratase (613 aa).

Aspartate 81 is a binding site for Mg(2+). Residue cysteine 122 coordinates [2Fe-2S] cluster. Residues aspartate 123 and lysine 124 each contribute to the Mg(2+) site. Residue lysine 124 is modified to N6-carboxylysine. Cysteine 193 provides a ligand contact to [2Fe-2S] cluster. Glutamate 489 serves as a coordination point for Mg(2+). Serine 515 functions as the Proton acceptor in the catalytic mechanism.

This sequence belongs to the IlvD/Edd family. As to quaternary structure, homodimer. The cofactor is [2Fe-2S] cluster. Requires Mg(2+) as cofactor.

It catalyses the reaction (2R)-2,3-dihydroxy-3-methylbutanoate = 3-methyl-2-oxobutanoate + H2O. The enzyme catalyses (2R,3R)-2,3-dihydroxy-3-methylpentanoate = (S)-3-methyl-2-oxopentanoate + H2O. The protein operates within amino-acid biosynthesis; L-isoleucine biosynthesis; L-isoleucine from 2-oxobutanoate: step 3/4. It participates in amino-acid biosynthesis; L-valine biosynthesis; L-valine from pyruvate: step 3/4. Its function is as follows. Functions in the biosynthesis of branched-chain amino acids. Catalyzes the dehydration of (2R,3R)-2,3-dihydroxy-3-methylpentanoate (2,3-dihydroxy-3-methylvalerate) into 2-oxo-3-methylpentanoate (2-oxo-3-methylvalerate) and of (2R)-2,3-dihydroxy-3-methylbutanoate (2,3-dihydroxyisovalerate) into 2-oxo-3-methylbutanoate (2-oxoisovalerate), the penultimate precursor to L-isoleucine and L-valine, respectively. This Pseudomonas fluorescens (strain SBW25) protein is Dihydroxy-acid dehydratase.